We begin with the raw amino-acid sequence, 97 residues long: Defensin-like protein 246 (97 aa).

Residues 1–24 (MKFVAIFLVTCVLFSLFPSHLSQG) form the signal peptide. 4 cysteine pairs are disulfide-bonded: C39/C96, C50/C79, C58/C89, and C77/C91.

Belongs to the DEFL family. Flower buds and stems.

The protein localises to the secreted. The sequence is that of Defensin-like protein 246 (SCRL5) from Arabidopsis thaliana (Mouse-ear cress).